The following is a 117-amino-acid chain: Immunoglobulin kappa variable 1D-43 (117 aa).

A signal peptide spans 1–22; that stretch reads MDMRVPAQRLGLLLLWFPGARC. A framework-1 region spans residues 23 to 45; the sequence is AIRMTQSPFSLSASVGDRVTITC. Residues 23 to 117 form the Ig-like domain; that stretch reads AIRMTQSPFS…YYCQQYYSTP (95 aa). An intrachain disulfide couples Cys45 to Cys110. The tract at residues 46-56 is complementarity-determining-1; it reads WASQGISSYLA. The interval 57–71 is framework-2; the sequence is WYQQKPAKAPKLFIY. The complementarity-determining-2 stretch occupies residues 72 to 78; it reads YASSLQS. The interval 79 to 110 is framework-3; sequence GVPSRFSGSGSGTDYTLTISSLQPEDFATYYC. A complementarity-determining-3 region spans residues 111–117; the sequence is QQYYSTP.

As to quaternary structure, immunoglobulins are composed of two identical heavy chains and two identical light chains; disulfide-linked.

The protein localises to the secreted. The protein resides in the cell membrane. Its function is as follows. V region of the variable domain of immunoglobulin light chains that participates in the antigen recognition. Immunoglobulins, also known as antibodies, are membrane-bound or secreted glycoproteins produced by B lymphocytes. In the recognition phase of humoral immunity, the membrane-bound immunoglobulins serve as receptors which, upon binding of a specific antigen, trigger the clonal expansion and differentiation of B lymphocytes into immunoglobulins-secreting plasma cells. Secreted immunoglobulins mediate the effector phase of humoral immunity, which results in the elimination of bound antigens. The antigen binding site is formed by the variable domain of one heavy chain, together with that of its associated light chain. Thus, each immunoglobulin has two antigen binding sites with remarkable affinity for a particular antigen. The variable domains are assembled by a process called V-(D)-J rearrangement and can then be subjected to somatic hypermutations which, after exposure to antigen and selection, allow affinity maturation for a particular antigen. This chain is Immunoglobulin kappa variable 1D-43, found in Homo sapiens (Human).